The primary structure comprises 206 residues: Ribonuclease HII (206 aa).

The region spanning 22-206 is the RNase H type-2 domain; it reads RFICGVDEAG…ISFLKNILSL (185 aa). Residues aspartate 28, glutamate 29, and aspartate 120 each coordinate a divalent metal cation.

It belongs to the RNase HII family. The cofactor is Mn(2+). Requires Mg(2+) as cofactor.

The protein localises to the cytoplasm. The catalysed reaction is Endonucleolytic cleavage to 5'-phosphomonoester.. Endonuclease that specifically degrades the RNA of RNA-DNA hybrids. In Caldicellulosiruptor bescii (strain ATCC BAA-1888 / DSM 6725 / KCTC 15123 / Z-1320) (Anaerocellum thermophilum), this protein is Ribonuclease HII.